The following is a 475-amino-acid chain: Squamosa promoter-binding-like protein 12 (475 aa).

Positions 49 to 73 (NHGSTNSSGGTFTSSSELANGSSKS) are disordered. Over residues 51–73 (GSTNSSGGTFTSSSELANGSSKS) the composition is skewed to low complexity. The SBP-type zinc finger occupies 177-254 (SSYCQVEGCK…SDHNARRRKP (78 aa)). Cys-180, Cys-185, Cys-202, His-205, Cys-221, Cys-224, His-228, and Cys-240 together coordinate Zn(2+). The Bipartite nuclear localization signal motif lies at 237–253 (KKSCRRRLSDHNARRRK). Residues 437–475 (GGGGFWQDGDDPPPLDHASQAQAFMHPGNGSSSGYGHLH) are disordered. The segment covering 465–475 (NGSSSGYGHLH) has biased composition (polar residues).

Expressed in young panicles.

It localises to the nucleus. Trans-acting factor that binds specifically to the consensus nucleotide sequence 5'-TNCGTACAA-3'. May be involved in panicle development. The protein is Squamosa promoter-binding-like protein 12 (SPL12) of Oryza sativa subsp. indica (Rice).